A 541-amino-acid polypeptide reads, in one-letter code: GMP synthase [glutamine-hydrolyzing] (541 aa).

One can recognise a Glutamine amidotransferase type-1 domain in the interval 17–212 (TILVLDFGSQ…AVDICQSTTD (196 aa)). Residue Cys-93 is the Nucleophile of the active site. Active-site residues include His-186 and Glu-188. The GMPS ATP-PPase domain maps to 213–416 (WTMGKFVDQE…LGIPEDLVWR (204 aa)). 241 to 247 (SGGVDST) serves as a coordination point for ATP. Positions 315, 478, 533, and 539 each coordinate XMP.

Homodimer. Mg(2+) serves as cofactor.

The protein localises to the cytoplasm. The protein resides in the cytosol. It carries out the reaction XMP + L-glutamine + ATP + H2O = GMP + L-glutamate + AMP + diphosphate + 2 H(+). It functions in the pathway purine metabolism; GMP biosynthesis; GMP from XMP (L-Gln route): step 1/1. Its function is as follows. Catalyzes the conversion of xanthine monophosphate (XMP) to GMP in the presence of glutamine and ATP through an adenyl-XMP intermediate. In Phaeosphaeria nodorum (strain SN15 / ATCC MYA-4574 / FGSC 10173) (Glume blotch fungus), this protein is GMP synthase [glutamine-hydrolyzing] (GUA1).